A 196-amino-acid chain; its full sequence is Blue copper protein (196 aa).

Positions 1-22 are cleaved as a signal peptide; sequence MAGVFKTVTFLVLVFAAVVVFA. Residues 23 to 125 enclose the Phytocyanin domain; that stretch reads EDYDVGDDTE…GQKLSITVVA (103 aa). Position 66 (His-66) interacts with Cu cation. A disulfide bridge connects residues Cys-79 and Cys-113. Residue Asn-98 is glycosylated (N-linked (GlcNAc...) asparagine). Positions 107, 112, and 117 each coordinate Cu cation. A disordered region spans residues 133-173; the sequence is TPGAGATPAPGSTPSTGGTTPPTAGGTTTPSGSSGTTTPAG. A compositionally biased stretch (low complexity) spans 135 to 173; the sequence is GAGATPAPGSTPSTGGTTPPTAGGTTTPSGSSGTTTPAG. Asn-174 is lipidated: GPI-anchor amidated asparagine. The propeptide at 175 to 196 is removed in mature form; sequence AASSLGGATFLVAFVSAVVALF.

It localises to the cell membrane. In terms of biological role, probably acts as an electron carrier. The sequence is that of Blue copper protein (BCB) from Arabidopsis thaliana (Mouse-ear cress).